The primary structure comprises 163 residues: Peptide deformylase 3 (163 aa).

Fe cation is bound by residues Cys91 and His133. Residue Glu134 is part of the active site. Position 137 (His137) interacts with Fe cation.

It belongs to the polypeptide deformylase family. Fe(2+) is required as a cofactor.

The catalysed reaction is N-terminal N-formyl-L-methionyl-[peptide] + H2O = N-terminal L-methionyl-[peptide] + formate. Its function is as follows. Removes the formyl group from the N-terminal Met of newly synthesized proteins. Requires at least a dipeptide for an efficient rate of reaction. N-terminal L-methionine is a prerequisite for activity but the enzyme has broad specificity at other positions. In Shewanella oneidensis (strain ATCC 700550 / JCM 31522 / CIP 106686 / LMG 19005 / NCIMB 14063 / MR-1), this protein is Peptide deformylase 3.